The primary structure comprises 102 residues: A-type ATP synthase subunit F (102 aa).

It belongs to the V-ATPase F subunit family. In terms of assembly, has multiple subunits with at least A(3), B(3), C, D, E, F, H, I and proteolipid K(x).

It localises to the cell membrane. Component of the A-type ATP synthase that produces ATP from ADP in the presence of a proton gradient across the membrane. This is A-type ATP synthase subunit F from Thermococcus onnurineus (strain NA1).